A 458-amino-acid chain; its full sequence is Exodeoxyribonuclease 7 large subunit (458 aa).

The protein belongs to the XseA family. In terms of assembly, heterooligomer composed of large and small subunits.

It is found in the cytoplasm. It catalyses the reaction Exonucleolytic cleavage in either 5'- to 3'- or 3'- to 5'-direction to yield nucleoside 5'-phosphates.. In terms of biological role, bidirectionally degrades single-stranded DNA into large acid-insoluble oligonucleotides, which are then degraded further into small acid-soluble oligonucleotides. This Yersinia enterocolitica serotype O:8 / biotype 1B (strain NCTC 13174 / 8081) protein is Exodeoxyribonuclease 7 large subunit.